Reading from the N-terminus, the 461-residue chain is Ribosomal protein uS12 methylthiotransferase RimO (461 aa).

The MTTase N-terminal domain maps to P9 to P124. Positions 18, 54, 83, 159, 163, and 166 each coordinate [4Fe-4S] cluster. Positions L145–K387 constitute a Radical SAM core domain. The region spanning Q389 to V461 is the TRAM domain.

This sequence belongs to the methylthiotransferase family. RimO subfamily. [4Fe-4S] cluster is required as a cofactor.

It is found in the cytoplasm. It carries out the reaction L-aspartate(89)-[ribosomal protein uS12]-hydrogen + (sulfur carrier)-SH + AH2 + 2 S-adenosyl-L-methionine = 3-methylsulfanyl-L-aspartate(89)-[ribosomal protein uS12]-hydrogen + (sulfur carrier)-H + 5'-deoxyadenosine + L-methionine + A + S-adenosyl-L-homocysteine + 2 H(+). Catalyzes the methylthiolation of an aspartic acid residue of ribosomal protein uS12. The protein is Ribosomal protein uS12 methylthiotransferase RimO of Polaromonas naphthalenivorans (strain CJ2).